The sequence spans 336 residues: Fructose-1,6-bisphosphatase class 1 (336 aa).

4 residues coordinate Mg(2+): Glu-90, Asp-112, Leu-114, and Asp-115. Substrate-binding positions include 115–118, Asn-211, and Lys-277; that span reads DGSS. Glu-283 lines the Mg(2+) pocket.

This sequence belongs to the FBPase class 1 family. As to quaternary structure, homotetramer. Mg(2+) is required as a cofactor.

Its subcellular location is the cytoplasm. It catalyses the reaction beta-D-fructose 1,6-bisphosphate + H2O = beta-D-fructose 6-phosphate + phosphate. It functions in the pathway carbohydrate biosynthesis; gluconeogenesis. This is Fructose-1,6-bisphosphatase class 1 from Pseudomonas putida (strain GB-1).